The following is a 396-amino-acid chain: Putative nickel insertion protein (396 aa).

The tract at residues 333–355 is disordered; sequence RSKLARESQTVETPDGPAKGKTV.

It belongs to the LarC family.

The protein is Putative nickel insertion protein of Rhodopirellula baltica (strain DSM 10527 / NCIMB 13988 / SH1).